The following is a 380-amino-acid chain: Lipid-A-disaccharide synthase (380 aa).

This sequence belongs to the LpxB family.

The enzyme catalyses a lipid X + a UDP-2-N,3-O-bis[(3R)-3-hydroxyacyl]-alpha-D-glucosamine = a lipid A disaccharide + UDP + H(+). It functions in the pathway bacterial outer membrane biogenesis; LPS lipid A biosynthesis. In terms of biological role, condensation of UDP-2,3-diacylglucosamine and 2,3-diacylglucosamine-1-phosphate to form lipid A disaccharide, a precursor of lipid A, a phosphorylated glycolipid that anchors the lipopolysaccharide to the outer membrane of the cell. The chain is Lipid-A-disaccharide synthase from Pseudomonas savastanoi pv. phaseolicola (strain 1448A / Race 6) (Pseudomonas syringae pv. phaseolicola (strain 1448A / Race 6)).